The following is a 168-amino-acid chain: Ribosome rescue factor SmrB (168 aa).

The region spanning 92–167 (LDLHGLTKEQ…GDAAILILFE (76 aa)) is the Smr domain.

Belongs to the SmrB family. In terms of assembly, associates with collided ribosomes, but not with correctly translating polysomes.

Its function is as follows. Acts as a ribosome collision sensor. Detects stalled/collided disomes (pairs of ribosomes where the leading ribosome is stalled and a second ribosome has collided with it) and endonucleolytically cleaves mRNA at the 5' boundary of the stalled ribosome. Stalled/collided disomes form a new interface (primarily via the 30S subunits) that binds SmrB. Cleaved mRNA becomes available for tmRNA ligation, leading to ribosomal subunit dissociation and rescue of stalled ribosomes. The sequence is that of Ribosome rescue factor SmrB from Pasteurella multocida (strain Pm70).